We begin with the raw amino-acid sequence, 455 residues long: Ribosomal protein uS12 methylthiotransferase RimO (455 aa).

One can recognise an MTTase N-terminal domain in the interval 21-131 (GKVGFISLGC…VVGAVHQYVP (111 aa)). [4Fe-4S] cluster-binding residues include C30, C66, C95, C164, C168, and C171. Residues 150–387 (LTPRHYAYLK…MAKQAEISAA (238 aa)) form the Radical SAM core domain. The 66-residue stretch at 390–455 (QAKIGRTIDV…DEHDLWARLI (66 aa)) folds into the TRAM domain.

The protein belongs to the methylthiotransferase family. RimO subfamily. The cofactor is [4Fe-4S] cluster.

Its subcellular location is the cytoplasm. It catalyses the reaction L-aspartate(89)-[ribosomal protein uS12]-hydrogen + (sulfur carrier)-SH + AH2 + 2 S-adenosyl-L-methionine = 3-methylsulfanyl-L-aspartate(89)-[ribosomal protein uS12]-hydrogen + (sulfur carrier)-H + 5'-deoxyadenosine + L-methionine + A + S-adenosyl-L-homocysteine + 2 H(+). In terms of biological role, catalyzes the methylthiolation of an aspartic acid residue of ribosomal protein uS12. In Marinobacter nauticus (strain ATCC 700491 / DSM 11845 / VT8) (Marinobacter aquaeolei), this protein is Ribosomal protein uS12 methylthiotransferase RimO.